Here is a 514-residue protein sequence, read N- to C-terminus: 2,3-bisphosphoglycerate-independent phosphoglycerate mutase (514 aa).

Asp14 and Ser64 together coordinate Mn(2+). The active-site Phosphoserine intermediate is the Ser64. Substrate-binding positions include His125, 155 to 156 (RD), Arg187, Arg193, 263 to 266 (RADR), and Lys336. Positions 403, 407, 444, 445, and 463 each coordinate Mn(2+).

The protein belongs to the BPG-independent phosphoglycerate mutase family. In terms of assembly, monomer. Requires Mn(2+) as cofactor.

The catalysed reaction is (2R)-2-phosphoglycerate = (2R)-3-phosphoglycerate. It functions in the pathway carbohydrate degradation; glycolysis; pyruvate from D-glyceraldehyde 3-phosphate: step 3/5. In terms of biological role, catalyzes the interconversion of 2-phosphoglycerate and 3-phosphoglycerate. This is 2,3-bisphosphoglycerate-independent phosphoglycerate mutase from Shigella dysenteriae serotype 1 (strain Sd197).